The sequence spans 608 residues: Histone-arginine methyltransferase CARM1 (608 aa).

Position 2 is an N-acetylalanine (Ala-2). Positions Ala-27–Ser-138 are interaction with C9orf72. Positions Ala-146–Val-453 constitute an SAM-dependent MTase PRMT-type domain. The S-adenosyl-L-methionine site is built by Gln-159, Arg-168, Gly-192, and Glu-214. Ser-216 carries the phosphoserine modification. Lys-227 is covalently cross-linked (Glycyl lysine isopeptide (Lys-Gly) (interchain with G-Cter in ubiquitin)). The S-adenosyl-L-methionine site is built by Glu-243 and Ser-271. The required for nuclear translocation stretch occupies residues Arg-346 to Leu-379. The tract at residues Thr-499–Ser-608 is transactivation domain. A Dimethylated arginine modification is found at Arg-550.

It belongs to the class I-like SAM-binding methyltransferase superfamily. Protein arginine N-methyltransferase family. Homodimer. Interacts with NR1H4. Interacts with SNRPC. Interacts with the C-terminus of NCOA2/GRIP1, NCO3/ACTR and NCOA1/SRC1. Part of a complex consisting of CARM1, EP300/P300 and NCOA2/GRIP1. Interacts with FLII, TP53, myogenic factor MEF2, EP300/P300, TRIM24, CREBBP and CTNNB1. Interacts with RELA. Identified in a complex containing CARM1, TRIM24 and NCOA2/GRIP1. Interacts with NCOA3/SRC3. Interacts with SKP2. Interacts (via PH domain-like fold) with C9orf72. Interacts with PARP1; promoting PARP1 recruimtent to replication forks. As to quaternary structure, (Microbial infection) Interacts with HTLV-1 protein Tax. In terms of processing, auto-methylated on Arg-550. Methylation enhances transcription coactivator activity. Methylation is required for its role in the regulation of pre-mRNA alternative splicing. Post-translationally, phosphorylation at Ser-216 is strongly increased during mitosis, and decreases rapidly to a very low, basal level after entry into the G1 phase of the cell cycle. Phosphorylation at Ser-216 may promote location in the cytosol. Phosphorylation at Ser-216 interferes with S-adenosyl-L-methionine binding and strongly reduces methyltransferase activity. Ubiquitinated by E3 ubiquitin-protein ligase complex containing FBXO9 at Lys-227; leading to proteasomal degradation. In terms of tissue distribution, overexpressed in prostate adenocarcinomas and high-grade prostatic intraepithelial neoplasia.

The protein resides in the nucleus. It localises to the cytoplasm. It is found in the chromosome. It carries out the reaction L-arginyl-[protein] + 2 S-adenosyl-L-methionine = N(omega),N(omega)-dimethyl-L-arginyl-[protein] + 2 S-adenosyl-L-homocysteine + 2 H(+). Methylation of H3R17 (H3R17me) by CARM1 is stimulated by preacetylation of H3 'Lys-18' (H3K18ac) H3 'Lys-23' (H3K23ac) by EP300 and blocked by citrullination of H3 'Arg-17' (H3R17ci) by PADI4. Methylates (mono- and asymmetric dimethylation) the guanidino nitrogens of arginyl residues in several proteins involved in DNA packaging, transcription regulation, pre-mRNA splicing, and mRNA stability. Recruited to promoters upon gene activation together with histone acetyltransferases from EP300/P300 and p160 families, methylates histone H3 at 'Arg-17' (H3R17me), forming mainly asymmetric dimethylarginine (H3R17me2a), leading to activation of transcription via chromatin remodeling. During nuclear hormone receptor activation and TCF7L2/TCF4 activation, acts synergically with EP300/P300 and either one of the p160 histone acetyltransferases NCOA1/SRC1, NCOA2/GRIP1 and NCOA3/ACTR or CTNNB1/beta-catenin to activate transcription. During myogenic transcriptional activation, acts together with NCOA3/ACTR as a coactivator for MEF2C. During monocyte inflammatory stimulation, acts together with EP300/P300 as a coactivator for NF-kappa-B. Acts as a coactivator for PPARG, promotes adipocyte differentiation and the accumulation of brown fat tissue. Plays a role in the regulation of pre-mRNA alternative splicing by methylation of splicing factors. Also seems to be involved in p53/TP53 transcriptional activation. Methylates EP300/P300, both at 'Arg-2142', which may loosen its interaction with NCOA2/GRIP1, and at 'Arg-580' and 'Arg-604' in the KIX domain, which impairs its interaction with CREB and inhibits CREB-dependent transcriptional activation. Also methylates arginine residues in RNA-binding proteins PABPC1, ELAVL1 and ELAV4, which may affect their mRNA-stabilizing properties and the half-life of their target mRNAs. Acts as a transcriptional coactivator of ACACA/acetyl-CoA carboxylase by enriching H3R17 methylation at its promoter, thereby positively regulating fatty acid synthesis. Independently of its methyltransferase activity, involved in replication fork progression: promotes PARP1 recruitment to replication forks, leading to poly-ADP-ribosylation of chromatin at replication forks and reduced fork speed. The sequence is that of Histone-arginine methyltransferase CARM1 (CARM1) from Homo sapiens (Human).